A 279-amino-acid chain; its full sequence is NH(3)-dependent NAD(+) synthetase (279 aa).

39–46 (GLSGGIDS) lines the ATP pocket. D45 contacts Mg(2+). Position 122 (R122) interacts with deamido-NAD(+). T142 contributes to the ATP binding site. Residue E147 participates in Mg(2+) binding. Deamido-NAD(+) is bound by residues K155 and D162. Positions 171 and 193 each coordinate ATP. Deamido-NAD(+) is bound at residue 253–254 (HK).

This sequence belongs to the NAD synthetase family. In terms of assembly, homodimer.

It catalyses the reaction deamido-NAD(+) + NH4(+) + ATP = AMP + diphosphate + NAD(+) + H(+). It participates in cofactor biosynthesis; NAD(+) biosynthesis; NAD(+) from deamido-NAD(+) (ammonia route): step 1/1. Functionally, catalyzes the ATP-dependent amidation of deamido-NAD to form NAD. Uses ammonia as a nitrogen source. In Sulfolobus acidocaldarius (strain ATCC 33909 / DSM 639 / JCM 8929 / NBRC 15157 / NCIMB 11770), this protein is NH(3)-dependent NAD(+) synthetase.